A 655-amino-acid chain; its full sequence is Epithelial sodium channel subunit gamma (655 aa).

At 1–55 the chain is on the cytoplasmic side; that stretch reads MAPGEKIKAKIKKNLPVRGPQAPTIKDLMHWYCLNTNTHGCRRIVVSRGRLRRLL. A helical membrane pass occupies residues 56-76; the sequence is WIAFTLTAVALIIWQCALLVF. Residues 77 to 547 are Extracellular-facing; it reads SFYTVSVSIK…GGQLGLWMSC (471 aa). Disulfide bonds link cysteine 100/cysteine 289, cysteine 213/cysteine 220, cysteine 266/cysteine 273, cysteine 378/cysteine 463, cysteine 400/cysteine 459, cysteine 404/cysteine 455, cysteine 413/cysteine 440, and cysteine 415/cysteine 429. Residues 140 to 227 are gating release of inhibition by proteolysis (GRIP); protease-sensitive region that is responsible for the proteolytic activation of the channel; the sequence is RKRREAGSMR…SDCATYTFSS (88 aa). Asparagine 215 carries N-linked (GlcNAc...) asparagine glycosylation. Asparagine 277 carries an N-linked (GlcNAc...) asparagine glycan. Asparagine 503 carries N-linked (GlcNAc...) asparagine glycosylation. The chain crosses the membrane as a helical span at residues 548–568; it reads SVVCVIEIIEVFFIDFFSIIA. Residues 569–655 are Cytoplasmic-facing; it reads RRQWQKAKDW…LTDTQLTNEF (87 aa). The segment at 582 to 636 is disordered; the sequence is RRTPPSTETPSSQQGQDNPALDTDDDLPTFTSAMRLPPAPEAPVPGTPPPRYNTL. Residues 585–598 show a composition bias toward polar residues; that stretch reads PPSTETPSSQQGQD. Positions 618 to 632 are enriched in pro residues; sequence PPAPEAPVPGTPPPR. The PY motif; recruits WW domain-containing proteins and is thereby required for ubiquitination and inhibition of the channel by NEDD4 and NEDD4L signature appears at 629–633; that stretch reads PPPRY.

Belongs to the amiloride-sensitive sodium channel (TC 1.A.6) family. SCNN1G subfamily. As to quaternary structure, component of the heterotrimeric epithelial sodium channel (ENaC) composed of an alpha/SCNN1A, a beta/SCNN1B and a gamma/SCNN1G subunit. Interacts with WWP1 (via WW domains). Interacts with WWP2 (via WW domains); inhibits the channel. Interacts with the full-length immature form of PCSK9 (pro-PCSK9); inhibits ENaC by promoting its proteasomal degradation. Interacts with BPIFA1; the interaction is indirect via SCNN1B and inhibits the proteolytic maturation of SCNN1A and SCNN1G and the activation of ENaC. In terms of processing, phosphorylated on serine and threonine residues. Aldosterone and insulin increase the basal level of phosphorylation. Ubiquitinated. Can be ubiquitinated at multiple sites and undergo monoubiquitination and polyubiquitination. Ubiquitination by NEDD4 or NEDD4L inhibits the ENaC channel through endocytosis, intracellular retention and degradation of its individual subunits. Post-translationally, ENaC is activated through the proteolytic maturation of its subunits. Furin cleaves the SCNN1G subunit first, followed by cleavage by prostasin (PRSS8), which results in a stepwise increase in the open probability of the channel due to the release of an inhibitory tract. BPIFA1, which is recruited by the SCNN1B subunit, prevents the proteolytic activation of ENaC. In terms of processing, N-glycosylated. N-linked glycans are processed to complex type during ENaC complex assembly and transport to the plasma membrane. In terms of tissue distribution, lung and kidney.

Its subcellular location is the apical cell membrane. The catalysed reaction is Na(+)(in) = Na(+)(out). Originally identified and characterized by its inhibition by the diuretic drug amiloride. This is one of the three pore-forming subunits of the heterotrimeric epithelial sodium channel (ENaC), a critical regulator of sodium balance and fluid homeostasis. ENaC operates in epithelial tissues, where it mediates the electrodiffusion of sodium ions from extracellular fluid through the apical membrane of cells, with water following osmotically. It plays a key role in maintaining sodium homeostasis through electrogenic sodium reabsorption in the kidneys. Additionally, ENaC is essential for airway surface liquid homeostasis, which is crucial for proper mucus clearance. In Mus musculus (Mouse), this protein is Epithelial sodium channel subunit gamma.